Consider the following 377-residue polypeptide: Hydrogenase maturation factor HypD (377 aa).

C41, C69, and C72 together coordinate Fe cation.

This sequence belongs to the HypD family. The cofactor is [4Fe-4S] cluster.

Its pathway is protein modification; [NiFe] hydrogenase maturation. Its function is as follows. Involved in the maturation of [NiFe] hydrogenases. Involved in the biosynthesis of the Fe(CN)(2)CO cofactor. The polypeptide is Hydrogenase maturation factor HypD (Rhodobacter capsulatus (Rhodopseudomonas capsulata)).